A 302-amino-acid chain; its full sequence is Recombination-associated protein RdgC (302 aa).

Belongs to the RdgC family.

It localises to the cytoplasm. It is found in the nucleoid. Its function is as follows. May be involved in recombination. In Proteus mirabilis (strain HI4320), this protein is Recombination-associated protein RdgC.